The following is a 1370-amino-acid chain: Histidine kinase P4 (1370 aa).

The first 20 residues, Met1–Lys20, serve as a signal peptide directing secretion. A helical transmembrane segment spans residues Trp799–Leu819. The region spanning Asn852–Arg1072 is the Histidine kinase domain. His855 bears the Phosphohistidine; by autocatalysis mark. The 116-residue stretch at Thr1119–Leu1234 folds into the Response regulatory domain. 4-aspartylphosphate is present on Asp1167. Residues Lys1266–Arg1365 form the HTH araC/xylS-type domain. 2 consecutive DNA-binding regions (H-T-H motif) follow at residues Leu1284–Thr1305 and Ile1332–Phe1355.

Autophosphorylated. Activation requires a sequential transfer of a phosphate group from a His in the primary transmitter domain, to an Asp in the receiver domain and to a His in the secondary transmitter domain.

It is found in the membrane. The protein resides in the cell surface. It carries out the reaction ATP + protein L-histidine = ADP + protein N-phospho-L-histidine.. Functionally, histidine kinase probably involved in ulvan degradation. Ulvan is the main polysaccharide component of the Ulvales (green seaweed) cell wall. It is composed of disaccharide building blocks comprising 3-sulfated rhamnose (Rha3S) linked to D-glucuronic acid (GlcA), L-iduronic acid (IduA), or D-xylose (Xyl). The chain is Histidine kinase P4 from Formosa agariphila (strain DSM 15362 / KCTC 12365 / LMG 23005 / KMM 3901 / M-2Alg 35-1).